Here is a 225-residue protein sequence, read N- to C-terminus: Rho GDP-dissociation inhibitor 3 (225 aa).

It belongs to the Rho GDI family. In terms of tissue distribution, detected only in brain, lung, kidney and testis.

It localises to the cytoplasm. In terms of biological role, inhibits GDP/GTP exchange reaction of RhoB. Interacts specifically with the GDP- and GTP-bound forms of post-translationally processed Rhob and Rhog proteins, both of which show a growth-regulated expression in mammalian cells. Stimulates the release of the GDP-bound but not the GTP-bound RhoB protein. Also inhibits the GDP/GTP exchange of RhoB but shows less ability to inhibit the dissociation of prebound GTP. The protein is Rho GDP-dissociation inhibitor 3 (Arhgdig) of Mus musculus (Mouse).